A 484-amino-acid polypeptide reads, in one-letter code: Sodium/pantothenate symporter (484 aa).

13 consecutive transmembrane segments (helical) span residues 3–23 (LGII…AIFA), 45–65 (GFVL…FVGG), 74–94 (LGWV…LGAL), 124–144 (VWLS…VQFI), 162–182 (LLLF…RAVV), 190–210 (TVMI…LGGV), 238–258 (FMAS…HTAV), 273–293 (MLIG…AGAL), 307–327 (VIPT…FLAA), 366–386 (VSYF…FAAL), 397–417 (LFAF…GIYW), 424–444 (GALS…QLGI), and 446–466 (LFNF…FLVG).

This sequence belongs to the sodium:solute symporter (SSF) (TC 2.A.21) family.

It localises to the cell inner membrane. The catalysed reaction is (R)-pantothenate(in) + Na(+)(in) = (R)-pantothenate(out) + Na(+)(out). Catalyzes the sodium-dependent uptake of extracellular pantothenate. The protein is Sodium/pantothenate symporter (panF) of Haemophilus influenzae (strain ATCC 51907 / DSM 11121 / KW20 / Rd).